The following is a 258-amino-acid chain: Axonemal dynein light intermediate polypeptide 1 (258 aa).

Disordered regions lie at residues 1-60 and 207-231; these read MIPP…CVPD and VNEQKAKCEATEKRESERRQVEEKK. Positions 34–44 are enriched in low complexity; it reads SPQQPGPSGSA. A coiled-coil region spans residues 176-255; the sequence is MRKALQAEQG…LKAQLEGIIA (80 aa).

It belongs to the inner dynein arm light chain family. Interacts with CFAP45. Interacts with DYNC1H1. In terms of tissue distribution, expressed in many tissues. A smaller 0.9 kb and a larger 2.5 kb transcripts were detected at the highest level in the testis, at medium levels in the prostate, heart, liver, lung and pancreas, at low levels in the ovary, skeletal muscle and small intestine. Not detected in spleen, colon epithelium, thymus or peripheral blood leukocytes. The 0.9 kb transcript is expressed at a 20-fold higher level than the 2.5 kb transcript in the testis. Expressed in spermatozoa and airway epithelial cells (at protein level).

It localises to the cell projection. It is found in the cilium. Its subcellular location is the flagellum. The protein localises to the dynein axonemal particle. The protein resides in the cytoplasm. Its function is as follows. Involved in sperm flagellum assembly. This Homo sapiens (Human) protein is Axonemal dynein light intermediate polypeptide 1.